The sequence spans 198 residues: Paired-like homeodomain transcription factor LEUTX (198 aa).

The homeobox DNA-binding region spans 33 to 67; that stretch reads PSLATMGKLASKLQLDLSVVKIWFKNQRAKWKRQQ. Residues 65–133 are disordered; sequence RQQRQQMQTR…PGGASASARV (69 aa). The interval 79-190 is LEUTX region; the sequence is PANQTTSVKK…NQYLFPVCLE (112 aa). Residues 110–119 show a composition bias toward basic and acidic residues; the sequence is ANDHDLREPS. 4 short sequence motifs (9aaTAD) span residues 125–136, 153–161, 163–171, and 178–186; these read GGASASARVSSW, PPWASTLFE, DEFVKIYDL, and SSLNQYLFP.

Belongs to the paired homeobox family.

Its subcellular location is the nucleus. Its function is as follows. Paired-like homeobox transcription factor involved in embryogenesis. May act as a regulator of embryo genome activation. Binds to a 36 bp DNA elements containing a 5'-TAATCC-3' sequence motif, referred to as EEA motif (EGA-enriched Alu-motif), present in the promoters of target genes activated in early embryos. In terms of biological role, inactive transcriptional activity. This chain is Paired-like homeodomain transcription factor LEUTX, found in Homo sapiens (Human).